We begin with the raw amino-acid sequence, 179 residues long: Dynein light chain Tctex-type 5 (179 aa).

This sequence belongs to the dynein light chain Tctex-type family. In terms of assembly, interacts with ZMYND10.

This Homo sapiens (Human) protein is Dynein light chain Tctex-type 5 (DYNLT5).